Here is a 117-residue protein sequence, read N- to C-terminus: Large ribosomal subunit protein bL19 (117 aa).

It belongs to the bacterial ribosomal protein bL19 family.

Its function is as follows. This protein is located at the 30S-50S ribosomal subunit interface and may play a role in the structure and function of the aminoacyl-tRNA binding site. In Aliivibrio fischeri (strain ATCC 700601 / ES114) (Vibrio fischeri), this protein is Large ribosomal subunit protein bL19.